Reading from the N-terminus, the 266-residue chain is 4-hydroxy-tetrahydrodipicolinate reductase (266 aa).

Residues 8–13 (GAAGRM) and glutamate 33 each bind NAD(+). Residue arginine 34 coordinates NADP(+). NAD(+) contacts are provided by residues 97–99 (GST) and 121–124 (APNM). Histidine 154 functions as the Proton donor/acceptor in the catalytic mechanism. Histidine 155 lines the (S)-2,3,4,5-tetrahydrodipicolinate pocket. Lysine 158 acts as the Proton donor in catalysis. A (S)-2,3,4,5-tetrahydrodipicolinate-binding site is contributed by 164–165 (GT).

This sequence belongs to the DapB family.

It is found in the cytoplasm. It catalyses the reaction (S)-2,3,4,5-tetrahydrodipicolinate + NAD(+) + H2O = (2S,4S)-4-hydroxy-2,3,4,5-tetrahydrodipicolinate + NADH + H(+). It carries out the reaction (S)-2,3,4,5-tetrahydrodipicolinate + NADP(+) + H2O = (2S,4S)-4-hydroxy-2,3,4,5-tetrahydrodipicolinate + NADPH + H(+). It functions in the pathway amino-acid biosynthesis; L-lysine biosynthesis via DAP pathway; (S)-tetrahydrodipicolinate from L-aspartate: step 4/4. Its function is as follows. Catalyzes the conversion of 4-hydroxy-tetrahydrodipicolinate (HTPA) to tetrahydrodipicolinate. The sequence is that of 4-hydroxy-tetrahydrodipicolinate reductase from Geobacter sulfurreducens (strain ATCC 51573 / DSM 12127 / PCA).